Reading from the N-terminus, the 549-residue chain is Chaperonin GroEL (549 aa).

Residues 29-32 (TAGP), Lys50, 86-90 (DGTTT), Gly418, and Asp499 each bind ATP.

This sequence belongs to the chaperonin (HSP60) family. As to quaternary structure, forms a cylinder of 14 subunits composed of two heptameric rings stacked back-to-back. Interacts with the co-chaperonin GroES.

Its subcellular location is the cytoplasm. The enzyme catalyses ATP + H2O + a folded polypeptide = ADP + phosphate + an unfolded polypeptide.. Functionally, together with its co-chaperonin GroES, plays an essential role in assisting protein folding. The GroEL-GroES system forms a nano-cage that allows encapsulation of the non-native substrate proteins and provides a physical environment optimized to promote and accelerate protein folding. The protein is Chaperonin GroEL of Wolbachia pipientis wMel.